The chain runs to 154 residues: Ribosome maturation factor RimP (154 aa).

This sequence belongs to the RimP family.

It is found in the cytoplasm. Its function is as follows. Required for maturation of 30S ribosomal subunits. The polypeptide is Ribosome maturation factor RimP (Clostridium kluyveri (strain ATCC 8527 / DSM 555 / NBRC 12016 / NCIMB 10680 / K1)).